The primary structure comprises 117 residues: Ribosome-binding factor A (117 aa).

Belongs to the RbfA family. In terms of assembly, monomer. Binds 30S ribosomal subunits, but not 50S ribosomal subunits or 70S ribosomes.

The protein resides in the cytoplasm. One of several proteins that assist in the late maturation steps of the functional core of the 30S ribosomal subunit. Associates with free 30S ribosomal subunits (but not with 30S subunits that are part of 70S ribosomes or polysomes). Required for efficient processing of 16S rRNA. May interact with the 5'-terminal helix region of 16S rRNA. The protein is Ribosome-binding factor A of Streptococcus thermophilus (strain CNRZ 1066).